Reading from the N-terminus, the 355-residue chain is MNQPKSAPNSTDSAQGLSYRDAGVDIDAGDALVDAIKPFAKKTMRDGVLGGIGGFGALFEVPKKYKEPVLVSGTDGVGTKLRLAFQLNKHDTVGQDLVAMSVNDILVQGAEPLFFLDYFACGKLDVGTAATVVKGIAHGCELSGCALIGGETAEMPGMYPDGEYDLAGFAVGAVEKSKIIDGSTIAPGDVVLGLASSGIHSNGFSLVRKIIERAQPDLNADFDGRSLADALMAPTHIYVKPLLALMQQIAVKGMAHITGGGLVENIPRVLREGLTAELDHRGWPLPPLFSWLQKHGGVADAEMHRVFNCGIGMAVVVSAADADAAIGLLSAAGEQVWKIGVIRESAAGEAQTVVV.

The protein belongs to the AIR synthase family.

It localises to the cytoplasm. The catalysed reaction is 2-formamido-N(1)-(5-O-phospho-beta-D-ribosyl)acetamidine + ATP = 5-amino-1-(5-phospho-beta-D-ribosyl)imidazole + ADP + phosphate + H(+). It functions in the pathway purine metabolism; IMP biosynthesis via de novo pathway; 5-amino-1-(5-phospho-D-ribosyl)imidazole from N(2)-formyl-N(1)-(5-phospho-D-ribosyl)glycinamide: step 2/2. The polypeptide is Phosphoribosylformylglycinamidine cyclo-ligase (Paraburkholderia phytofirmans (strain DSM 17436 / LMG 22146 / PsJN) (Burkholderia phytofirmans)).